The chain runs to 513 residues: Zinc finger protein 395 (513 aa).

Residues 17 to 29 (ARVLGPSASEGPS) show a composition bias toward low complexity. The segment at 17 to 56 (ARVLGPSASEGPSAAPPSEPLLEGAAPQPFTTSDDTPCQE) is disordered. A compositionally biased stretch (polar residues) spans 45-55 (PFTTSDDTPCQ). The short motif at 165 to 174 (MDEMMAAMVL) is the Nuclear export signal element. Residues 204–269 (KESGDISDSG…DPFLLDEPAP (66 aa)) are disordered. Positions 209–229 (ISDSGSSTTSGHWSGSSGVST) are enriched in low complexity. A Phosphoserine modification is found at Ser-248. The C2H2-type zinc finger occupies 280–305 (YKCLWPNCGKVLRSIVGIKRHVKALH). Residues 335–394 (AAAAAAAGTPVPGTPTSEPAPTPSMTGLPLSALPPPLHKAQSSGPEHPGPESSLPSGALS) form a disordered region. Over residues 348–359 (TPTSEPAPTPSM) the composition is skewed to polar residues. Phosphoserine occurs at positions 376 and 449. Residues 376 to 391 (SSGPEHPGPESSLPSG) are compositionally biased toward low complexity.

In terms of assembly, interacts with repression-mediating E2 binding site P2 of human papillomavirus type 8 (HPV8). As to expression, widely expressed.

It localises to the cytoplasm. It is found in the nucleus. Its function is as follows. Plays a role in papillomavirus genes transcription. The protein is Zinc finger protein 395 (ZNF395) of Homo sapiens (Human).